We begin with the raw amino-acid sequence, 390 residues long: Lipid droplet-regulating VLDL assembly factor AUP1 homolog (390 aa).

Residues 1-32 (MASPEASSSGNTEDLRIEDLFHQKRNEDTIAK) are Cytoplasmic-facing. Residues 33–53 (IFSIIYAPVGLIILLIRVFLG) lie within the membrane without spanning it. Over 54 to 390 (FHTFIVACLL…NRQKYMNRDS (337 aa)) the chain is Cytoplasmic. The region spanning 305 to 347 (QMDECAMRIKQSFPSFHLSAIRRDLEKTRSQTTTVNNLKAGKI) is the CUE domain.

The protein belongs to the AUP1 family.

The protein resides in the endoplasmic reticulum membrane. It localises to the lipid droplet. In Caenorhabditis elegans, this protein is Lipid droplet-regulating VLDL assembly factor AUP1 homolog.